A 100-amino-acid polypeptide reads, in one-letter code: Large ribosomal subunit protein uL23 (100 aa).

It belongs to the universal ribosomal protein uL23 family. Part of the 50S ribosomal subunit. Contacts protein L29, and trigger factor when it is bound to the ribosome.

One of the early assembly proteins it binds 23S rRNA. One of the proteins that surrounds the polypeptide exit tunnel on the outside of the ribosome. Forms the main docking site for trigger factor binding to the ribosome. The sequence is that of Large ribosomal subunit protein uL23 from Aeromonas hydrophila subsp. hydrophila (strain ATCC 7966 / DSM 30187 / BCRC 13018 / CCUG 14551 / JCM 1027 / KCTC 2358 / NCIMB 9240 / NCTC 8049).